We begin with the raw amino-acid sequence, 314 residues long: Putative peptide transport system permease protein BruAb2_1031 (314 aa).

6 helical membrane-spanning segments follow: residues 12–32 (AIPV…LLPG), 101–121 (LALL…VVAA), 135–155 (LALL…VILF), 177–197 (WLRS…GYLA), 237–257 (VSVL…SVVI), and 286–306 (MLFL…LYTI). One can recognise an ABC transmembrane type-1 domain in the interval 95–304 (LPVTISLALL…AINVLVDILY (210 aa)).

Belongs to the binding-protein-dependent transport system permease family. The complex is composed of two ATP-binding proteins (BruAb2_1033 and BruAb2_1034), two transmembrane proteins (BruAb2_1031 and BruAb2_1032) and a solute-binding protein (BruAb2_1030).

It is found in the cell inner membrane. In terms of biological role, probably part of an ABC transporter complex that could be involved in peptide import. Probably responsible for the translocation of the substrate across the membrane. This chain is Putative peptide transport system permease protein BruAb2_1031, found in Brucella abortus biovar 1 (strain 9-941).